Consider the following 468-residue polypeptide: Siroheme synthase 1 (468 aa).

Residues 1 to 204 (MDYLPIFCRL…GDKASANQLA (204 aa)) are precorrin-2 dehydrogenase /sirohydrochlorin ferrochelatase. NAD(+)-binding positions include 22-23 (EV) and 43-44 (PA). S128 carries the phosphoserine modification. Residues 216-468 (GEVILVGAGP…NHGVQAAALA (253 aa)) form a uroporphyrinogen-III C-methyltransferase region. Residue P225 participates in S-adenosyl-L-methionine binding. Catalysis depends on D248, which acts as the Proton acceptor. K270 acts as the Proton donor in catalysis. S-adenosyl-L-methionine contacts are provided by residues 301–303 (GGD), I306, 331–332 (TA), M383, and G412.

The protein in the N-terminal section; belongs to the precorrin-2 dehydrogenase / sirohydrochlorin ferrochelatase family. In the C-terminal section; belongs to the precorrin methyltransferase family.

The catalysed reaction is uroporphyrinogen III + 2 S-adenosyl-L-methionine = precorrin-2 + 2 S-adenosyl-L-homocysteine + H(+). It catalyses the reaction precorrin-2 + NAD(+) = sirohydrochlorin + NADH + 2 H(+). It carries out the reaction siroheme + 2 H(+) = sirohydrochlorin + Fe(2+). It functions in the pathway cofactor biosynthesis; adenosylcobalamin biosynthesis; precorrin-2 from uroporphyrinogen III: step 1/1. It participates in cofactor biosynthesis; adenosylcobalamin biosynthesis; sirohydrochlorin from precorrin-2: step 1/1. The protein operates within porphyrin-containing compound metabolism; siroheme biosynthesis; precorrin-2 from uroporphyrinogen III: step 1/1. Its pathway is porphyrin-containing compound metabolism; siroheme biosynthesis; siroheme from sirohydrochlorin: step 1/1. It functions in the pathway porphyrin-containing compound metabolism; siroheme biosynthesis; sirohydrochlorin from precorrin-2: step 1/1. Its function is as follows. Multifunctional enzyme that catalyzes the SAM-dependent methylations of uroporphyrinogen III at position C-2 and C-7 to form precorrin-2 via precorrin-1. Then it catalyzes the NAD-dependent ring dehydrogenation of precorrin-2 to yield sirohydrochlorin. Finally, it catalyzes the ferrochelation of sirohydrochlorin to yield siroheme. The polypeptide is Siroheme synthase 1 (Aeromonas salmonicida (strain A449)).